Here is a 187-residue protein sequence, read N- to C-terminus: GTPase KRas (187 aa).

GTP is bound by residues Gly-10 to Ala-18, Val-29 to Thr-35, Ala-59 to Gly-60, and Asn-116 to Ala-119. The Effector region signature appears at Tyr-32–Tyr-40. The disordered stretch occupies residues Glu-168–Leu-187. The residue at position 184 (Cys-184) is a Cysteine methyl ester. Residue Cys-184 is the site of S-farnesyl cysteine attachment. Residues Ser-185–Leu-187 constitute a propeptide, removed in mature form.

Belongs to the small GTPase superfamily. Ras family.

It localises to the cell membrane. The protein localises to the cytoplasm. It carries out the reaction GTP + H2O = GDP + phosphate + H(+). With respect to regulation, alternates between an inactive form bound to GDP and an active form bound to GTP. Activated by a guanine nucleotide-exchange factor (GEF) and inactivated by a GTPase-activating protein (GAP). In terms of biological role, ras proteins bind GDP/GTP and possess intrinsic GTPase activity. Plays an important role in the regulation of cell proliferation. The chain is GTPase KRas (kras) from Xenopus laevis (African clawed frog).